The chain runs to 216 residues: Thiamine-phosphate synthase (216 aa).

Residues 41–45 and aspartate 77 contribute to the 4-amino-2-methyl-5-(diphosphooxymethyl)pyrimidine site; that span reads QLREK. Residues aspartate 78 and aspartate 97 each contribute to the Mg(2+) site. Serine 116 contributes to the 4-amino-2-methyl-5-(diphosphooxymethyl)pyrimidine binding site. Position 143 to 145 (143 to 145) interacts with 2-[(2R,5Z)-2-carboxy-4-methylthiazol-5(2H)-ylidene]ethyl phosphate; that stretch reads TTS. Lysine 146 is a 4-amino-2-methyl-5-(diphosphooxymethyl)pyrimidine binding site. Residues glycine 174 and 194–195 contribute to the 2-[(2R,5Z)-2-carboxy-4-methylthiazol-5(2H)-ylidene]ethyl phosphate site; that span reads IS.

It belongs to the thiamine-phosphate synthase family. Mg(2+) is required as a cofactor.

The catalysed reaction is 2-[(2R,5Z)-2-carboxy-4-methylthiazol-5(2H)-ylidene]ethyl phosphate + 4-amino-2-methyl-5-(diphosphooxymethyl)pyrimidine + 2 H(+) = thiamine phosphate + CO2 + diphosphate. It carries out the reaction 2-(2-carboxy-4-methylthiazol-5-yl)ethyl phosphate + 4-amino-2-methyl-5-(diphosphooxymethyl)pyrimidine + 2 H(+) = thiamine phosphate + CO2 + diphosphate. It catalyses the reaction 4-methyl-5-(2-phosphooxyethyl)-thiazole + 4-amino-2-methyl-5-(diphosphooxymethyl)pyrimidine + H(+) = thiamine phosphate + diphosphate. It participates in cofactor biosynthesis; thiamine diphosphate biosynthesis; thiamine phosphate from 4-amino-2-methyl-5-diphosphomethylpyrimidine and 4-methyl-5-(2-phosphoethyl)-thiazole: step 1/1. Functionally, condenses 4-methyl-5-(beta-hydroxyethyl)thiazole monophosphate (THZ-P) and 2-methyl-4-amino-5-hydroxymethyl pyrimidine pyrophosphate (HMP-PP) to form thiamine monophosphate (TMP). This Pediococcus pentosaceus (strain ATCC 25745 / CCUG 21536 / LMG 10740 / 183-1w) protein is Thiamine-phosphate synthase.